The following is a 950-amino-acid chain: Leucine--tRNA ligase (950 aa).

A 'HIGH' region motif is present at residues 72-83 (PYPSGEGLHVGH). The 'KMSKS' region signature appears at 722–726 (KIGKS). Lys725 contacts ATP.

Belongs to the class-I aminoacyl-tRNA synthetase family.

The protein resides in the cytoplasm. The catalysed reaction is tRNA(Leu) + L-leucine + ATP = L-leucyl-tRNA(Leu) + AMP + diphosphate. In Mycobacterium sp. (strain KMS), this protein is Leucine--tRNA ligase.